Consider the following 790-residue polypeptide: Probable phosphoketolase (790 aa).

It belongs to the XFP family. Requires thiamine diphosphate as cofactor.

The polypeptide is Probable phosphoketolase (Nitrosomonas europaea (strain ATCC 19718 / CIP 103999 / KCTC 2705 / NBRC 14298)).